Reading from the N-terminus, the 493-residue chain is Lysine--tRNA ligase (493 aa).

Mg(2+)-binding residues include glutamate 406 and glutamate 413.

The protein belongs to the class-II aminoacyl-tRNA synthetase family. Homodimer. Requires Mg(2+) as cofactor.

Its subcellular location is the cytoplasm. It carries out the reaction tRNA(Lys) + L-lysine + ATP = L-lysyl-tRNA(Lys) + AMP + diphosphate. The sequence is that of Lysine--tRNA ligase from Leuconostoc citreum (strain KM20).